A 487-amino-acid polypeptide reads, in one-letter code: MESHVVHNAQKPHVVCVPYPAQGHINPMLKVAKLLYAKGFHVTFVNTLYNHNRLLRSRGPNALDGFPSFRFESIPDGLPETDGDRTQHTPTVCMSIEKNCLAPFKEILRRINDKDDVPPVSCIVSDGVMSFTLDAAEELGVPEVIFWTNSACGFMTILHFYLFIEKGLSPFKDESYMSKEHLDTVIDWIPSMKNLRLKDIPSYIRTTNPDNIMLNFLIREVERSKRASAIILNTFDELEHDVIQSMQSILPPVYSIGPLHLLVKEEINEASEIGQMGLNLWREEMECLDWLDTKTPNSVLFVNFGCITVMSAKQLEEFAWGLAASRKEFLWVIRPNLVVGEAMVVLPQEFLAETIDRRMLASWCPQEKVLSHPAIGGFLTHCGWNSTLESLAGGVPMICWPCFSEQPTNCKFCCDEWGVGIEIGKDVKREEVETVVRELMDGEKGKKLREKAEEWRRLAEEATRYKHGSSVMNLETLIHKVFLENLR.

UDP-alpha-D-glucose contacts are provided by residues 364–366, 381–389, and 403–406; these read CPQ, HCGWNSTLE, and FSEQ.

The protein belongs to the UDP-glycosyltransferase family. Expressed in roots, shoots, leaves and flowers.

This chain is UDP-glycosyltransferase 85A7 (UGT85A7), found in Arabidopsis thaliana (Mouse-ear cress).